Here is a 270-residue protein sequence, read N- to C-terminus: uncharacterized protein (270 aa).

A signal peptide spans 1–22; sequence MEYIKKIALYMSVLLLIIFIGG. Residue C23 is the site of N-palmitoyl cysteine attachment. C23 carries the S-diacylglycerol cysteine lipid modification.

It belongs to the staphylococcal tandem lipoprotein family.

The protein resides in the cell membrane. This is an uncharacterized protein from Staphylococcus aureus (strain MW2).